Here is a 483-residue protein sequence, read N- to C-terminus: MHHKSLAELASALKAREFSSEELTQHYLKRIERLNEDLNSFITVSTEEALKQAKAADAILQSGEGSSITGIPLAHKDIFCTTGVKTSCGSKMLDNFTAPYNATVVSRLKTAGAVMLGKTNMDEFAMGSSNETSFYGSVKNPWAHDRVPGGSSGGSAAAVAARLTPAATGTDTGGSIRQPAALCGITGLKPTYGRVSRYGMIAFASSLDQGGPMARTAQDAALLLNVMAGFDERDSTSVAQDVPDYTLSLEESIKGIKIGLPTEYFDENLNPGIAIPIEAAIKEFERLGAQIREISLPNTKLAVPTYYVVAPAECSSNLSRYDGTRFGYRCDNPKDLLELYCRSRGEGFGPEVKRRILIGTYVLSAGYYDAYYLKAQKLRRLISDDFKQALTEVDVIMGPTSPTPAFRLGEKSDDPVAMYLADIYTINVNLAGLPALSIPAGFAQGLPVGLQIIGNYFSESRLLNLAHRYQQVTDWHDRIPAGY.

Active-site charge relay system residues include lysine 76 and serine 151. The Acyl-ester intermediate role is filled by serine 175.

The protein belongs to the amidase family. GatA subfamily. As to quaternary structure, heterotrimer of A, B and C subunits.

It carries out the reaction L-glutamyl-tRNA(Gln) + L-glutamine + ATP + H2O = L-glutaminyl-tRNA(Gln) + L-glutamate + ADP + phosphate + H(+). Functionally, allows the formation of correctly charged Gln-tRNA(Gln) through the transamidation of misacylated Glu-tRNA(Gln) in organisms which lack glutaminyl-tRNA synthetase. The reaction takes place in the presence of glutamine and ATP through an activated gamma-phospho-Glu-tRNA(Gln). The sequence is that of Glutamyl-tRNA(Gln) amidotransferase subunit A from Nitrosococcus oceani (strain ATCC 19707 / BCRC 17464 / JCM 30415 / NCIMB 11848 / C-107).